A 406-amino-acid chain; its full sequence is MVSAKLPSIFIEAQLPLIYANIILAFALGPQAHTFRVCLTLPILLFLVCQSLYREQNGPWEDLLSNNSLVMFTVFVYIDWILLQSPDREQWHKLNNAKTESNGPTKAKESGPPHGFFQRIWFGCRIATAWRYIGWSCQVKNVPMEHSAGYPRRYFIARKSLRALAFYLMKETLEVYTASTPHGGWWDTQNTKPALSIKNVPLWHQFKYTWVHIFLAYATLEMANSILGVVSVILHLATPQECPSAFGDLEDFFTVRKAWSTVWHQHMRRLTSTMGLFVARDLMQLRKGSFQSKYVQLFVGFGVSAGLHAGVALLCSKALNDDSALFFFGIQAPIIMLEDHVIAKGKSLGFKDSPLWRFIGFVWTTLAIGFTCRAWVGSMIDNGMWVHARKKDSVIQGLLINAIQQP.

The next 6 helical transmembrane spans lie at Ile9 to Gly29, Ala32 to Leu52, Leu63 to Leu83, Val295 to Cys315, Ser323 to Ala343, and Phe358 to Ser378.

This sequence belongs to the wax synthase family.

The protein localises to the membrane. The protein operates within mycotoxin biosynthesis. Its function is as follows. Acetyltransferase; part of the gene cluster that mediates the biosynthesis of sirodesmin PL, an epipolythiodioxopiperazine (ETP) characterized by a disulfide bridged cyclic dipeptide and that acts as a phytotoxin which is involved in the blackleg didease of canola. SirD catalyzes the O-prenylation of L-tyrosine (L-Tyr) in the presence of dimethylallyl diphosphate (DMAPP) to yield 4-O-dimethylallyl-L-Tyr, and therefore represents probably the first pathway-specific enzyme in the biosynthesis of sirodesmin PL. 4-O-dimethylallyl-L-Tyr, then undergoes condensation with L-Ser in a reaction catalyzed by the non-ribosomal peptide synthase sirP to form the diketopiperazine (DKP) backbone. Further bishydroxylation of the DKP performed by the cytochrome P450 monooxygenase sirC leads to the production of the intermediate phomamide. This step is essential to form the reactive thiol group required for toxicity of sirodesmin PL. The next steps of sirodesmin biosynthesis are not well understood yet, but some predictions could be made from intermediate compounds identification. Phomamide is converted into phomalizarine via oxidation, probably by sirT. Further oxidation, methylation (by sirM or sirN) and reduction steps convert phomalizarine to deacetyl sirodesmin. Finally, acetyltransferase sirH probably acetylates deacetyl sirodesmin to produce sirodesmin PL. The sequence is that of Acetyltransferase sirH from Leptosphaeria maculans (Blackleg fungus).